A 285-amino-acid chain; its full sequence is Geranyl diphosphate 2-C-methyltransferase (285 aa).

This sequence belongs to the geranyl diphosphate 2-C-methyltransferase family. The cofactor is Mg(2+).

It carries out the reaction (2E)-geranyl diphosphate + S-adenosyl-L-methionine = (E)-2-methylgeranyl diphosphate + S-adenosyl-L-homocysteine + H(+). Functionally, catalyzes the SAM-dependent methylation of geranyl diphosphate (GPP) to yield (E)-2-methylgeranyl diphosphate (2-MeGPP). The sequence is that of Geranyl diphosphate 2-C-methyltransferase from Saccharopolyspora erythraea (strain ATCC 11635 / DSM 40517 / JCM 4748 / NBRC 13426 / NCIMB 8594 / NRRL 2338).